Consider the following 4116-residue polypeptide: Dynein axonemal heavy chain 3 (4116 aa).

Disordered stretches follow at residues 1–68 and 137–172; these read MGAT…ANEE and VPRDRTGQGLPSSGNRSSSEPMRKKTKFSSRNKEDS. A stem region spans residues 1–1390; the sequence is MGATGRLELT…QVQIITTEAL (1390 aa). Positions 145–156 are enriched in polar residues; it reads GLPSSGNRSSSE. Residues 785 to 852 are a coiled coil; the sequence is DLIKRCSEFE…NKEEELLEKE (68 aa). AAA stretches follow at residues 1391–1612, 1672–1903, 2036–2284, and 2395–2646; these read YGYE…VLTA, KVLN…LHCK, KVPA…VIQG, and EFNN…LRRH. ATP contacts are provided by residues 1429 to 1436, 1710 to 1717, 2074 to 2081, and 2434 to 2441; these read GPAGTGKT, GDPMGGKT, GPTGTGKS, and GIGGSGRQ. Residues 2661–2960 are stalk; sequence FKTLLNSKRQ…KDLEENIEIC (300 aa). 2 AAA regions span residues 3045 to 3275 and 3488 to 3712; these read LGDP…EISE and VREF…QIQM.

Belongs to the dynein heavy chain family. In terms of assembly, consists of at least two heavy chains and a number of intermediate and light chains. Expressed primarily in trachea and testis, 2 tissues containing axonemal structures. Also expressed in lung.

It is found in the cytoplasm. Its subcellular location is the cytoskeleton. The protein resides in the cilium axoneme. Its function is as follows. Force generating protein of respiratory cilia. Produces force towards the minus ends of microtubules. Dynein has ATPase activity; the force-producing power stroke is thought to occur on release of ADP. Involved in sperm motility; implicated in sperm flagellar assembly. This chain is Dynein axonemal heavy chain 3 (DNAH3), found in Homo sapiens (Human).